A 280-amino-acid polypeptide reads, in one-letter code: 4-diphosphocytidyl-2-C-methyl-D-erythritol kinase (280 aa).

K8 is an active-site residue. 91–101 (PVSAGLAGGST) is an ATP binding site. D133 is a catalytic residue.

It belongs to the GHMP kinase family. IspE subfamily.

The enzyme catalyses 4-CDP-2-C-methyl-D-erythritol + ATP = 4-CDP-2-C-methyl-D-erythritol 2-phosphate + ADP + H(+). Its pathway is isoprenoid biosynthesis; isopentenyl diphosphate biosynthesis via DXP pathway; isopentenyl diphosphate from 1-deoxy-D-xylulose 5-phosphate: step 3/6. In terms of biological role, catalyzes the phosphorylation of the position 2 hydroxy group of 4-diphosphocytidyl-2C-methyl-D-erythritol. In Clostridium beijerinckii (strain ATCC 51743 / NCIMB 8052) (Clostridium acetobutylicum), this protein is 4-diphosphocytidyl-2-C-methyl-D-erythritol kinase.